Reading from the N-terminus, the 345-residue chain is Mariner Mos1 transposase (345 aa).

A DNA-binding region spans residues 1–112 (MSSFVPNKEQ…VSNRLREMGK (112 aa)). DNA-binding regions (H-T-H motif) lie at residues 24 to 55 (TAAE…RFKS) and 89 to 110 (QKQL…LREM). The segment at 113–125 (IQKVGRWVPHELN) is linker. Residues 126–345 (ERQMERRKNT…CVASDGKYLE (220 aa)) form a catalytic region. Mg(2+) is bound by residues Asp-156, Asp-249, and Asp-284.

In terms of assembly, homodimer. The complex has a trans arrangement, with each transposon end recognized by the DNA binding region of one transposase monomer and by the active site of the other monomer. Requires Mg(2+) as cofactor. Mn(2+) serves as cofactor.

It is found in the nucleus. In terms of biological role, mediates transposition of transposon Mos1 by a 'cut and paste' mechanism. Transposases are sequence-specific nucleases and strand transferases that catalyze transposition through an ordered series of events: sequence-specific binding of transposase to the terminal inverted repeats (IR) present at each end of the transposon, pairing of the transposon IRs in a paired-end complex (PEC), cleavage of one or both DNA strands at each transposon end, capture of target DNA, and strand transfer to insert the transposon at a new site. The sequence is that of Mariner Mos1 transposase (mariner\T) from Drosophila mauritiana (Fruit fly).